The following is a 543-amino-acid chain: Chaperonin GroEL 2 (543 aa).

ATP contacts are provided by residues 29–32 (TLGP), 86–90 (DGTTT), G413, and D495. The tract at residues 524 to 543 (KPEPKENAPTGAGMGGDFDY) is disordered.

The protein belongs to the chaperonin (HSP60) family. In terms of assembly, forms a cylinder of 14 subunits composed of two heptameric rings stacked back-to-back. Interacts with the co-chaperonin GroES.

Its subcellular location is the cytoplasm. It carries out the reaction ATP + H2O + a folded polypeptide = ADP + phosphate + an unfolded polypeptide.. Its function is as follows. Together with its co-chaperonin GroES, plays an essential role in assisting protein folding. The GroEL-GroES system forms a nano-cage that allows encapsulation of the non-native substrate proteins and provides a physical environment optimized to promote and accelerate protein folding. This chain is Chaperonin GroEL 2, found in Acaryochloris marina (strain MBIC 11017).